The following is a 444-amino-acid chain: Exodeoxyribonuclease 7 large subunit (444 aa).

The protein belongs to the XseA family. In terms of assembly, heterooligomer composed of large and small subunits.

The protein resides in the cytoplasm. The enzyme catalyses Exonucleolytic cleavage in either 5'- to 3'- or 3'- to 5'-direction to yield nucleoside 5'-phosphates.. In terms of biological role, bidirectionally degrades single-stranded DNA into large acid-insoluble oligonucleotides, which are then degraded further into small acid-soluble oligonucleotides. The sequence is that of Exodeoxyribonuclease 7 large subunit from Rickettsia canadensis (strain McKiel).